The sequence spans 277 residues: Outer membrane lipoprotein 1 (277 aa).

Positions 1 to 19 (MSFKKILGVALVSALALTA) are cleaved as a signal peptide. Residue Cys-20 is the site of N-palmitoyl cysteine attachment. Cys-20 carries S-diacylglycerol cysteine lipidation.

Belongs to the NlpA lipoprotein family.

Its subcellular location is the cell outer membrane. In Mannheimia haemolytica (Pasteurella haemolytica), this protein is Outer membrane lipoprotein 1 (plpA).